Here is a 418-residue protein sequence, read N- to C-terminus: Serine hydroxymethyltransferase (418 aa).

(6S)-5,6,7,8-tetrahydrofolate is bound by residues leucine 121 and 125 to 127 (GHL). Lysine 230 carries the post-translational modification N6-(pyridoxal phosphate)lysine. (6S)-5,6,7,8-tetrahydrofolate is bound by residues glutamate 246 and 355-357 (SPF).

The protein belongs to the SHMT family. Homodimer. The cofactor is pyridoxal 5'-phosphate.

Its subcellular location is the cytoplasm. The enzyme catalyses (6R)-5,10-methylene-5,6,7,8-tetrahydrofolate + glycine + H2O = (6S)-5,6,7,8-tetrahydrofolate + L-serine. It functions in the pathway one-carbon metabolism; tetrahydrofolate interconversion. Its pathway is amino-acid biosynthesis; glycine biosynthesis; glycine from L-serine: step 1/1. Functionally, catalyzes the reversible interconversion of serine and glycine with tetrahydrofolate (THF) serving as the one-carbon carrier. This reaction serves as the major source of one-carbon groups required for the biosynthesis of purines, thymidylate, methionine, and other important biomolecules. Also exhibits THF-independent aldolase activity toward beta-hydroxyamino acids, producing glycine and aldehydes, via a retro-aldol mechanism. The chain is Serine hydroxymethyltransferase from Streptococcus pneumoniae serotype 4 (strain ATCC BAA-334 / TIGR4).